The sequence spans 240 residues: Methylthioribulose-1-phosphate dehydratase (240 aa).

Cys-99 provides a ligand contact to substrate. Residues His-116 and His-118 each coordinate Zn(2+). Residue Glu-145 is the Proton donor/acceptor of the active site. His-201 serves as a coordination point for Zn(2+).

The protein belongs to the aldolase class II family. MtnB subfamily. Zn(2+) serves as cofactor.

It localises to the cytoplasm. It carries out the reaction 5-(methylsulfanyl)-D-ribulose 1-phosphate = 5-methylsulfanyl-2,3-dioxopentyl phosphate + H2O. The protein operates within amino-acid biosynthesis; L-methionine biosynthesis via salvage pathway; L-methionine from S-methyl-5-thio-alpha-D-ribose 1-phosphate: step 2/6. Functionally, catalyzes the dehydration of methylthioribulose-1-phosphate (MTRu-1-P) into 2,3-diketo-5-methylthiopentyl-1-phosphate (DK-MTP-1-P). The chain is Methylthioribulose-1-phosphate dehydratase from Paracoccidioides brasiliensis (strain Pb03).